The following is a 913-amino-acid chain: Chitin synthase 1 (913 aa).

Positions 1–135 (MAYRGGGPND…QQPGAQTGGL (135 aa)) are disordered. Residue asparagine 25 is glycosylated (N-linked (GlcNAc...) asparagine). The span at 41 to 56 (RDPHARGTSPYEHHLG) shows a compositional bias: basic and acidic residues. A glycan (N-linked (GlcNAc...) asparagine) is linked at asparagine 539. 7 helical membrane-spanning segments follow: residues 566-586 (FFFH…WFSL), 625-645 (IINS…FVLA), 658-678 (IASF…SGYL), 712-732 (VILV…FMYL), 740-760 (SFPY…VYAF), 840-860 (TGLV…ITTD), and 881-901 (FLLY…LWFL).

The protein belongs to the chitin synthase family. Class III subfamily.

It is found in the cell membrane. The enzyme catalyses [(1-&gt;4)-N-acetyl-beta-D-glucosaminyl](n) + UDP-N-acetyl-alpha-D-glucosamine = [(1-&gt;4)-N-acetyl-beta-D-glucosaminyl](n+1) + UDP + H(+). Polymerizes chitin, a structural polymer of the cell wall and septum, by transferring the sugar moiety of UDP-GlcNAc to the non-reducing end of the growing chitin polymer. Plays a role in cell wall integrity and is involved in tolerance to hyperosmotic conditions. Required to successfully penetrate the host plants and thus plays a key role in pathogenicity. In Verticillium dahliae (strain VdLs.17 / ATCC MYA-4575 / FGSC 10137) (Verticillium wilt), this protein is Chitin synthase 1.